The following is a 183-amino-acid chain: Outer membrane protein H.8 (183 aa).

Positions 1-17 (MKAYLALISAAVIGLAA) are cleaved as a signal peptide. The N-palmitoyl cysteine moiety is linked to residue Cys18. Cys18 carries S-diacylglycerol cysteine lipidation. The interval 27–51 (AEATPAAEAPASEAPAAEAAPADAA) is disordered. The region spanning 57–183 (GNCAATVESN…LMNGKVTLVD (127 aa)) is the Plastocyanin-like domain. Residues His102, Cys166, His171, and Met175 each contribute to the Cu cation site.

Cu cation is required as a cofactor.

The protein localises to the cell outer membrane. This is Outer membrane protein H.8 from Neisseria meningitidis serogroup B (strain ATCC BAA-335 / MC58).